The sequence spans 91 residues: Large ribosomal subunit protein bL27 (91 aa).

Belongs to the bacterial ribosomal protein bL27 family.

The polypeptide is Large ribosomal subunit protein bL27 (Deinococcus deserti (strain DSM 17065 / CIP 109153 / LMG 22923 / VCD115)).